Here is a 240-residue protein sequence, read N- to C-terminus: MNAEKSPVNHNVDHEEIAKFEAVASRWWDLEGEFKPLHRINPLRLSYIAERAGGLFGKKVLDVGCGGGILAESMAREGATVTGLDMGFEPLQVAKLHALESGIQVDYVQETVEEHAAKHAGQYDVVTCMEMLEHVPDPQSVVRACAQLVKPGGDVFFSTLNRNGKSWLMAVVGAEYILRMVPKGTHDVKKFIKPAELLGWVDQTSLKERHITGLHYNPITNTFKLGPGVDVNYMLHTQNK.

Residues R44, G64, D85, and M129 each coordinate S-adenosyl-L-methionine.

The protein belongs to the methyltransferase superfamily. UbiG/COQ3 family.

The catalysed reaction is a 3-demethylubiquinol + S-adenosyl-L-methionine = a ubiquinol + S-adenosyl-L-homocysteine + H(+). It catalyses the reaction a 3-(all-trans-polyprenyl)benzene-1,2-diol + S-adenosyl-L-methionine = a 2-methoxy-6-(all-trans-polyprenyl)phenol + S-adenosyl-L-homocysteine + H(+). It functions in the pathway cofactor biosynthesis; ubiquinone biosynthesis. In terms of biological role, O-methyltransferase that catalyzes the 2 O-methylation steps in the ubiquinone biosynthetic pathway. This is Ubiquinone biosynthesis O-methyltransferase from Escherichia coli O157:H7.